A 20-amino-acid polypeptide reads, in one-letter code: Cathepsin L-like cysteine proteinase (20 aa).

The protein belongs to the peptidase C1 family.

Its subcellular location is the lysosome. Its function is as follows. Thiol protease. The sequence is that of Cathepsin L-like cysteine proteinase from Fasciola hepatica (Liver fluke).